Consider the following 210-residue polypeptide: Probable GTP-binding protein EngB (210 aa).

Residues 25 to 199 (TGIEVAFAGR…RQKLDTWFSE (175 aa)) form the EngB-type G domain. GTP contacts are provided by residues 33–40 (GRSNAGKS), 60–64 (GRTQL), 78–81 (DLPG), 145–148 (TKAD), and 178–180 (FSS). Mg(2+) contacts are provided by serine 40 and threonine 62.

This sequence belongs to the TRAFAC class TrmE-Era-EngA-EngB-Septin-like GTPase superfamily. EngB GTPase family. Mg(2+) serves as cofactor.

In terms of biological role, necessary for normal cell division and for the maintenance of normal septation. The polypeptide is Probable GTP-binding protein EngB (Shigella flexneri).